We begin with the raw amino-acid sequence, 264 residues long: Accessory gland-specific peptide 26Aa (264 aa).

An N-terminal signal peptide occupies residues 1-18 (MNQILLCSPILLLLFTVA). A sufficient for promoting ovulation when expressed in females region spans residues 1–138 (MNQILLCSPI…LQQRLLTEQN (138 aa)). Asn88, Asn122, Asn138, and Asn145 each carry an N-linked (GlcNAc...) asparagine glycan. A disordered region spans residues 189-219 (LQNTRKSTKPCKKRSSKDSAPPAANQFQEAN). Positions 194–203 (KSTKPCKKRS) are enriched in basic residues. The segment at 219–264 (NVRNTYRNKYLTLLKELSQKINNEIAKVATDVPTETNPSQGNLPTL) is necessary and sufficient for homodimerization.

In terms of assembly, homodimer. May form a homodimer. Glycosylation. Post-translationally, undergoes several cleavages as it is secreted and is further processed in the recipient female. The precursor molecule is proteolytically cleaved by the seminal metalloprotease Semp1 at Lys-48 to produce CP1-N and CP1-C. In terms of processing, cleaved at Lys-67 by Semp1 to generate CP2-N and CP2-C. Cleavage appears to take place in the mated female genital tract. Cleaved at Lys-117 by Semp1 to generate CP3-N and CP3-C. Cleavage appears to take place in the mated female genital tract. Produced in the male accessory glands and secreted into seminal fluid (at protein level). Detected in the main cells and secondary cells of the accessory glands of 1 day old males (at protein level). In 5 day old males, confined to the secondary cells and only reappears in the main cells after mating (at protein level). Produced in adult males 3-4 hr after eclosion, levels increase reaching a peak at day 3-5 which is maintained until at least day 10 of adulthood (at protein level). In unmated male adults, levels are maintained for the first 6 days of adulthood and then gradually decrease for at least the next 8 days. In mated females, detected in the genital tract 3 minutes after the start of mating (ASM) and is secreted into the female hemolymph via the posterior vaginal wall 5 minutes ASM (at protein level).

Its subcellular location is the secreted. It localises to the cytoplasm. Its function is as follows. Male seminal protein which enhances ovulation in female Drosophila by stimulating the release of oocytes by the ovary following mating. Acts by increasing octopamine (OA) neuronal signaling in the female genital tract leading to the postmating relaxation of the oviduct muscles. This activation of the OA signaling pathway is likely to indirectly contribute to the mating-dependent increase in the number of OA synaptic sites in the female reproductive tract. In terms of biological role, male seminal peptide which is able to enhance ovulation in female Drosophila. The chain is Accessory gland-specific peptide 26Aa from Drosophila melanogaster (Fruit fly).